The following is an 87-amino-acid chain: Small ribosomal subunit protein uS17 (87 aa).

It belongs to the universal ribosomal protein uS17 family. In terms of assembly, part of the 30S ribosomal subunit.

Its function is as follows. One of the primary rRNA binding proteins, it binds specifically to the 5'-end of 16S ribosomal RNA. In Staphylococcus carnosus (strain TM300), this protein is Small ribosomal subunit protein uS17.